A 70-amino-acid polypeptide reads, in one-letter code: Putative RNA-binding protein YbcJ (70 aa).

In terms of domain architecture, S4 RNA-binding spans 12–68 (VELCDLLKLEGWSESGAQAKIAIAEGQVKVDGAVETRKRCKIVAGQTVSFAGHSVQV).

In pull-down experiments interacts with CedA.

Its function is as follows. Its structure and the presence of conserved basic residues indicates that it probably binds RNA. In Escherichia coli (strain K12), this protein is Putative RNA-binding protein YbcJ (ybcJ).